A 506-amino-acid chain; its full sequence is Probable Xaa-Pro aminopeptidase BDBG_08406 (506 aa).

D285, D296, E433, and E471 together coordinate Mn(2+).

Belongs to the peptidase M24B family. The cofactor is Mn(2+).

It catalyses the reaction Release of any N-terminal amino acid, including proline, that is linked to proline, even from a dipeptide or tripeptide.. Catalyzes the removal of a penultimate prolyl residue from the N-termini of peptides. The sequence is that of Probable Xaa-Pro aminopeptidase BDBG_08406 from Blastomyces gilchristii (strain SLH14081) (Blastomyces dermatitidis).